The primary structure comprises 200 residues: Large ribosomal subunit protein uL4 (200 aa).

Residues 38–72 form a disordered region; sequence GRQGTKQQKTRSDVAGGGKRPWRQKGTGRARAGTT.

The protein belongs to the universal ribosomal protein uL4 family. As to quaternary structure, part of the 50S ribosomal subunit.

Functionally, one of the primary rRNA binding proteins, this protein initially binds near the 5'-end of the 23S rRNA. It is important during the early stages of 50S assembly. It makes multiple contacts with different domains of the 23S rRNA in the assembled 50S subunit and ribosome. Its function is as follows. Forms part of the polypeptide exit tunnel. The protein is Large ribosomal subunit protein uL4 of Pseudomonas entomophila (strain L48).